We begin with the raw amino-acid sequence, 1405 residues long: DNA-directed RNA polymerase subunit beta' (1405 aa).

Positions 70, 72, 85, and 88 each coordinate Zn(2+). Mg(2+)-binding residues include aspartate 460, aspartate 462, and aspartate 464. Cysteine 814, cysteine 888, cysteine 895, and cysteine 898 together coordinate Zn(2+).

Belongs to the RNA polymerase beta' chain family. The RNAP catalytic core consists of 2 alpha, 1 beta, 1 beta' and 1 omega subunit. When a sigma factor is associated with the core the holoenzyme is formed, which can initiate transcription. Requires Mg(2+) as cofactor. Zn(2+) serves as cofactor.

It catalyses the reaction RNA(n) + a ribonucleoside 5'-triphosphate = RNA(n+1) + diphosphate. Functionally, DNA-dependent RNA polymerase catalyzes the transcription of DNA into RNA using the four ribonucleoside triphosphates as substrates. In Shewanella baltica (strain OS223), this protein is DNA-directed RNA polymerase subunit beta'.